The chain runs to 926 residues: MADDDVLFEDVYELCEVIGKGPFSVVRRCINRETGQQFAVKIVDVAKFTSSPGLSTEDLKREASICHMLKHPHIVELLETYSSDGMLYMVFEFMDGADLCFEIVKRADAGFVYSEAVASHYMRQILEALRYCHDNNIIHRDVKPHCVLLASKENSAPVKLGGFGVAIQLGESGLVAGGRVGTPHFMAPEVVKREPYGKPVDVWGCGVILFILLSGCLPFYGTKERLFEGIIKGKYKMNPRQWSHISESAKDLVRRMLMLDPAERITVYEALNHPWLKERDRYAYKIHLPETVEQLRKFNARRKLKGAVLAAVSSHKFNSFYGDPPEELPDFSEDPTSSGLLAAERAVSQVLDSLEEIHALTDCSEKDLDFLHSVFQDQHLHTLLDLYDKINTKSSPQIRNPPSDAVQRAKEVLEEISCYPENNDAKELKRILTQPHFMALLQTHDVVAHEVYSDEALRVTPPPTSPYLNGDSPESANGDMDMENVTRVRLVQFQKNTDEPMGITLKMNELNHCIVARIMHGGMIHRQGTLHVGDEIREINGISVANQTVEQLQKMLREMRGSITFKIVPSYRTQSSSCERDSPSTSRQSPANGHSSTNNSVSDLPSTTQPKGRQIYVRAQFEYDPAKDDLIPCKEAGIRFRVGDIIQIISKDDHNWWQGKLENSKNGTAGLIPSPELQEWRVACIAMEKTKQEQQASCTWFGKKKKQYKDKYLAKHNAVFDQLDLVTYEEVVKLPAFKRKTLVLLGAHGVGRRHIKNTLITKHPDRFAYPIPHTTRPPKKDEENGKNYYFVSHDQMMQDISNNEYLEYGSHEDAMYGTKLETIRKIHEQGLIAILDVEPQALKVLRTAEFAPFVVFIAAPTITPGLNEDESLQRLQKESDILQRTYAHYFDLTIINNEIDETIRHLEEAVELVCTAPQWVPVSWVY.

The 265-residue stretch at 12–276 folds into the Protein kinase domain; the sequence is YELCEVIGKG…VYEALNHPWL (265 aa). Residues 18-26 and Lys41 each bind ATP; that span reads IGKGPFSVV. Ser51 is subject to Phosphoserine. The active site involves Asp141. Residues Ser151 and Ser155 each carry the phosphoserine; by autocatalysis modification. Thr182 carries the post-translational modification Phosphothreonine. 2 positions are modified to phosphoserine: Lys192 and Ser313. The calmodulin-binding stretch occupies residues 305-315; that stretch reads KGAVLAAVSSH. L27 domains lie at 343-398 and 402-455; these read AERA…SPQI and PSDA…YSDE. Residues 482–909 are required for interaction with NRXN1 (via C-terminal tail); the sequence is MENVTRVRLV…DETIRHLEEA (428 aa). Residues 489–564 form the PDZ domain; the sequence is RLVQFQKNTD…MLREMRGSIT (76 aa). Phosphoserine occurs at positions 571 and 577. Residues 574–610 form a disordered region; sequence QSSSCERDSPSTSRQSPANGHSSTNNSVSDLPSTTQP. An SH3 domain is found at 612-682; the sequence is GRQIYVRAQF…PSPELQEWRV (71 aa). One can recognise a Guanylate kinase-like domain in the interval 739–911; the sequence is RKTLVLLGAH…TIRHLEEAVE (173 aa).

The protein in the N-terminal section; belongs to the protein kinase superfamily. CAMK Ser/Thr protein kinase family. CaMK subfamily. Belongs to the MAGUK family. In terms of assembly, CASK and LIN7 form two mutually exclusive tripartite complexes with APBA1 or CASKIN1. Component of the brain-specific heterotrimeric complex (LIN-10-LIN-2-LIN-7 complex) composed of at least APBA1, CASK, and LIN7, which associates with the motor protein KIF17 to transport vesicles along microtubules. Forms a heterotrimeric complex with DLG1 and LIN7B via their L27 domains. Identified in a complex with ACTN4, IQGAP1, MAGI2, NPHS1, SPTAN1 and SPTBN1. Part of a complex containing CASK, TBR1 and TSPYL2. Interacts with WHRN. Interacts (via the PDZ, SH3 and guanylate kinase-like domains) with NRXN1 (via C-terminus). Interacts with CASKIN1, APBA1, LIN7(A/B/C) and L27 domain of DLG1 and isoform 2 of DLG4. Interacts with FCHSD2. Interacts with KIRREL3. Interacts with TBR1. Interacts with TSPYL2. Unlike other protein kinases, does not require a divalent cation such as magnesium for catalytic activity. serves as cofactor. Ubiquitous. Expression is significantly greater in brain relative to kidney, lung, and liver and in fetal brain and kidney relative to lung and liver.

The protein resides in the nucleus. The protein localises to the cytoplasm. It localises to the cell membrane. The enzyme catalyses L-seryl-[protein] + ATP = O-phospho-L-seryl-[protein] + ADP + H(+). It catalyses the reaction L-threonyl-[protein] + ATP = O-phospho-L-threonyl-[protein] + ADP + H(+). Differs from archetypal CaMK members in that the kinase domain exhibits a constitutively active conformation and the autoinhibitory region does not engage in direct contact with the ATP-binding cleft, although it still binds Ca(2+)/CAM. Its function is as follows. Multidomain scaffolding Mg(2+)-independent protein kinase that catalyzes the phosphotransfer from ATP to proteins such as NRXN1, and plays a role in synaptic transmembrane protein anchoring and ion channel trafficking. Contributes to neural development and regulation of gene expression via interaction with the transcription factor TBR1. Binds to cell-surface proteins, including amyloid precursor protein, neurexins and syndecans. May mediate a link between the extracellular matrix and the actin cytoskeleton via its interaction with syndecan and with the actin/spectrin-binding protein 4.1. Component of the LIN-10-LIN-2-LIN-7 complex, which associates with the motor protein KIF17 to transport vesicles containing N-methyl-D-aspartate (NMDA) receptor subunit NR2B along microtubules. The chain is Peripheral plasma membrane protein CASK from Homo sapiens (Human).